Here is a 776-residue protein sequence, read N- to C-terminus: DNA topoisomerase 1 (776 aa).

In terms of domain architecture, Toprim spans 1 to 111; the sequence is MKLVIVESPA…VKSDDFFKRV (111 aa). Mg(2+) is bound by residues Glu-7 and Asp-80. The Topo IA-type catalytic domain maps to 132-568; that stretch reads DTNLVNAQQA…FWSGFNHNIE (437 aa). The segment at 166-171 is interaction with DNA; sequence SAGRVQ. Tyr-304 functions as the O-(5'-phospho-DNA)-tyrosine intermediate in the catalytic mechanism. Residues 600 to 627 form a C4-type zinc finger; sequence CPSCNTGELSLKLGKFGAFLACSNYPEC.

This sequence belongs to the type IA topoisomerase family. In terms of assembly, monomer. Requires Mg(2+) as cofactor.

It catalyses the reaction ATP-independent breakage of single-stranded DNA, followed by passage and rejoining.. Releases the supercoiling and torsional tension of DNA, which is introduced during the DNA replication and transcription, by transiently cleaving and rejoining one strand of the DNA duplex. Introduces a single-strand break via transesterification at a target site in duplex DNA. The scissile phosphodiester is attacked by the catalytic tyrosine of the enzyme, resulting in the formation of a DNA-(5'-phosphotyrosyl)-enzyme intermediate and the expulsion of a 3'-OH DNA strand. The free DNA strand then undergoes passage around the unbroken strand, thus removing DNA supercoils. Finally, in the religation step, the DNA 3'-OH attacks the covalent intermediate to expel the active-site tyrosine and restore the DNA phosphodiester backbone. This chain is DNA topoisomerase 1, found in Rickettsia conorii (strain ATCC VR-613 / Malish 7).